The following is a 92-amino-acid chain: Small ribosomal subunit protein uS19 (92 aa).

It belongs to the universal ribosomal protein uS19 family.

Protein S19 forms a complex with S13 that binds strongly to the 16S ribosomal RNA. The chain is Small ribosomal subunit protein uS19 from Shewanella halifaxensis (strain HAW-EB4).